Reading from the N-terminus, the 522-residue chain is DNA damage-binding protein CMR1 (522 aa).

The segment at 38-100 (AGVLEKSRAP…DNQLLKMGSP (63 aa)) is disordered. A compositionally biased stretch (polar residues) spans 54-63 (TTNTRATKSA). Phosphoserine is present on Ser64. Position 69 is a phosphothreonine (Thr69). Residues 75 to 84 (LRGESADDVK) are compositionally biased toward basic and acidic residues. 7 WD repeats span residues 183–224 (ITYE…LADS), 239–281 (LFTK…EVLT), 287–327 (DDSL…SEYN), 331–371 (LADK…KKPE), 388–427 (DSRL…HLSA), 442–481 (GRWT…LAHL), and 482–521 (PTAT…IKQE). Residue Ser224 is modified to Phosphoserine.

The protein belongs to the WD repeat DDB2/WDR76 family.

It localises to the cytoplasm. Its subcellular location is the nucleus. In terms of biological role, DNA-binding protein that binds to both single- and double-stranded DNA. Binds preferentially to UV-damaged DNA in vitro. May be involved in DNA-metabolic processes. The polypeptide is DNA damage-binding protein CMR1 (Saccharomyces cerevisiae (strain ATCC 204508 / S288c) (Baker's yeast)).